The following is a 158-amino-acid chain: Frataxin homolog, mitochondrial (158 aa).

It belongs to the frataxin family. Monomer. Oligomer.

Its subcellular location is the mitochondrion. The enzyme catalyses 4 Fe(2+) + O2 + 4 H(+) = 4 Fe(3+) + 2 H2O. In terms of biological role, promotes the biosynthesis of heme as well as the assembly and repair of iron-sulfur clusters by delivering Fe(2+) to proteins involved in these pathways. May play a role in the protection against iron-catalyzed oxidative stress through its ability to catalyze the oxidation of Fe(2+) to Fe(3+). May be able to store large amounts of the metal in the form of a ferrihydrite mineral by oligomerization. The polypeptide is Frataxin homolog, mitochondrial (Schizosaccharomyces pombe (strain 972 / ATCC 24843) (Fission yeast)).